Here is a 187-residue protein sequence, read N- to C-terminus: UPF0301 protein VF_0434 (187 aa).

Belongs to the UPF0301 (AlgH) family.

This chain is UPF0301 protein VF_0434, found in Aliivibrio fischeri (strain ATCC 700601 / ES114) (Vibrio fischeri).